Reading from the N-terminus, the 340-residue chain is Anthranilate phosphoribosyltransferase (340 aa).

Residues glycine 79, 82-83 (GD), serine 87, 89-92 (NIST), 107-115 (KHGNRSVSS), and serine 119 each bind 5-phospho-alpha-D-ribose 1-diphosphate. An anthranilate-binding site is contributed by glycine 79. Mg(2+) is bound at residue serine 91. Asparagine 110 serves as a coordination point for anthranilate. Arginine 165 contributes to the anthranilate binding site. Residues aspartate 224 and glutamate 225 each coordinate Mg(2+).

Belongs to the anthranilate phosphoribosyltransferase family. As to quaternary structure, homodimer. It depends on Mg(2+) as a cofactor.

It catalyses the reaction N-(5-phospho-beta-D-ribosyl)anthranilate + diphosphate = 5-phospho-alpha-D-ribose 1-diphosphate + anthranilate. The protein operates within amino-acid biosynthesis; L-tryptophan biosynthesis; L-tryptophan from chorismate: step 2/5. In terms of biological role, catalyzes the transfer of the phosphoribosyl group of 5-phosphorylribose-1-pyrophosphate (PRPP) to anthranilate to yield N-(5'-phosphoribosyl)-anthranilate (PRA). This chain is Anthranilate phosphoribosyltransferase, found in Oceanobacillus iheyensis (strain DSM 14371 / CIP 107618 / JCM 11309 / KCTC 3954 / HTE831).